Consider the following 251-residue polypeptide: Putative deaminase AgaI (251 aa).

Asp-86 serves as the catalytic Proton acceptor; for enolization step. The For ring-opening step role is filled by Asn-154. His-156 serves as the catalytic Proton acceptor; for ring-opening step. Catalysis depends on Glu-161, which acts as the For ring-opening step.

This sequence belongs to the glucosamine/galactosamine-6-phosphate isomerase family.

In Escherichia coli (strain K12), this protein is Putative deaminase AgaI (agaI).